A 395-amino-acid polypeptide reads, in one-letter code: Probable nitrate/nitrite transporter NarK2 (395 aa).

12 helical membrane passes run 8 to 28 (LVLATWISVVNFWAWNLIGPL), 45 to 65 (LLVATPILVGALGRIVTGPLT), 72 to 92 (AMLIAVTLASILPVLAVGVAA), 98 to 118 (ALLVFFGLFLGVAGTIFAVGI), 131 to 151 (GFSTGVFGMGMVGTALSAFFT), 157 to 177 (WFGLFTTHAIVAAALASTAVV), 205 to 225 (LPVTWEMSFLYAIVFGGFVAF), 244 to 266 (AGARTAGFALAAVLARPVGGWLS), 274 to 294 (VVLASLAGTALLAFAAALQPP), 301 to 321 (ATFITLAVCLGVGTGGVFAWV), 333 to 353 (VTGIVAAAGGLGGYFPPLVMG), and 365 to 385 (VGLLLLVATALVACTYTALHA).

The protein belongs to the major facilitator superfamily. Nitrate/nitrite porter (TC 2.A.1.8) family.

It localises to the cell membrane. In terms of biological role, involved in excretion of nitrite produced by the dissimilatory reduction of nitrate. The protein is Probable nitrate/nitrite transporter NarK2 (narK2) of Mycobacterium tuberculosis (strain CDC 1551 / Oshkosh).